A 121-amino-acid polypeptide reads, in one-letter code: Small ribosomal subunit protein bS6 (121 aa).

Belongs to the bacterial ribosomal protein bS6 family.

Binds together with bS18 to 16S ribosomal RNA. This chain is Small ribosomal subunit protein bS6, found in Rickettsia conorii (strain ATCC VR-613 / Malish 7).